Reading from the N-terminus, the 378-residue chain is Deoxyguanosinetriphosphate triphosphohydrolase-like protein (378 aa).

The interval 1–28 is disordered; the sequence is MLAPFACQPGESRGRQKPESMSTFRSPF. The HD domain maps to 62–198; that stretch reads RLTHSIEVAQ…AAIADDVAYS (137 aa).

It belongs to the dGTPase family. Type 2 subfamily.

The protein is Deoxyguanosinetriphosphate triphosphohydrolase-like protein of Cereibacter sphaeroides (strain ATCC 17029 / ATH 2.4.9) (Rhodobacter sphaeroides).